The chain runs to 286 residues: Putative sugar uptake protein lin0215 (286 aa).

8 consecutive transmembrane segments (helical) span residues 4 to 26 (MIAL…FGGS), 33 to 55 (GMTL…VYTL), 114 to 136 (LRII…TSYA), 149 to 167 (GLIT…VVLI), 177 to 194 (AILP…IMTH), 207 to 226 (LLLI…MVHA), 230 to 252 (VGVA…GGIV), and 264 to 283 (LYVI…IGVA).

The protein belongs to the GRP transporter (TC 2.A.7.5) family.

The protein resides in the cell membrane. This is Putative sugar uptake protein lin0215 from Listeria innocua serovar 6a (strain ATCC BAA-680 / CLIP 11262).